Reading from the N-terminus, the 98-residue chain is NADH-ubiquinone oxidoreductase chain 4L (98 aa).

The next 3 membrane-spanning stretches (helical) occupy residues 1–21 (MSMV…GLLM), 29–49 (SLLC…LTIL), and 61–81 (IILL…LVMV).

Belongs to the complex I subunit 4L family. As to quaternary structure, core subunit of respiratory chain NADH dehydrogenase (Complex I) which is composed of 45 different subunits.

The protein resides in the mitochondrion inner membrane. It carries out the reaction a ubiquinone + NADH + 5 H(+)(in) = a ubiquinol + NAD(+) + 4 H(+)(out). Core subunit of the mitochondrial membrane respiratory chain NADH dehydrogenase (Complex I) which catalyzes electron transfer from NADH through the respiratory chain, using ubiquinone as an electron acceptor. Part of the enzyme membrane arm which is embedded in the lipid bilayer and involved in proton translocation. This is NADH-ubiquinone oxidoreductase chain 4L (MT-ND4L) from Bos indicus (Zebu).